Reading from the N-terminus, the 99-residue chain is Integration host factor subunit beta (99 aa).

Belongs to the bacterial histone-like protein family. As to quaternary structure, heterodimer of an alpha and a beta chain.

Its function is as follows. This protein is one of the two subunits of integration host factor, a specific DNA-binding protein that functions in genetic recombination as well as in transcriptional and translational control. The chain is Integration host factor subunit beta from Laribacter hongkongensis (strain HLHK9).